The primary structure comprises 131 residues: Large-conductance mechanosensitive channel (131 aa).

3 helical membrane passes run F8–G28, I30–I50, and G67–V87.

It belongs to the MscL family. In terms of assembly, homopentamer.

It is found in the cell membrane. In terms of biological role, channel that opens in response to stretch forces in the membrane lipid bilayer. May participate in the regulation of osmotic pressure changes within the cell. In Geobacillus thermodenitrificans (strain NG80-2), this protein is Large-conductance mechanosensitive channel.